The sequence spans 550 residues: Chaperonin GroEL (550 aa).

Residues 30-33, Lys-51, 87-91, Gly-415, and Asp-497 each bind ATP; these read TLGP and DGTTT.

Belongs to the chaperonin (HSP60) family. As to quaternary structure, forms a cylinder of 14 subunits composed of two heptameric rings stacked back-to-back. Interacts with the co-chaperonin GroES.

The protein localises to the cytoplasm. It carries out the reaction ATP + H2O + a folded polypeptide = ADP + phosphate + an unfolded polypeptide.. Functionally, together with its co-chaperonin GroES, plays an essential role in assisting protein folding. The GroEL-GroES system forms a nano-cage that allows encapsulation of the non-native substrate proteins and provides a physical environment optimized to promote and accelerate protein folding. The protein is Chaperonin GroEL of Yersinia enterocolitica.